The following is a 293-amino-acid chain: Large ribosomal subunit protein uL4 (293 aa).

2 stretches are compositionally biased toward basic and acidic residues: residues 1–14 (MAEELKKTTKEKTP) and 33–55 (KTTEVKKADKLEKVSKPKSESTK). 2 disordered regions span residues 1–72 (MAEE…IKSE) and 130–166 (QRQGTHSTKTRSEVSGGGKKPWKQKGTGRARAGSTRS).

The protein belongs to the universal ribosomal protein uL4 family. As to quaternary structure, part of the 50S ribosomal subunit.

In terms of biological role, one of the primary rRNA binding proteins, this protein initially binds near the 5'-end of the 23S rRNA. It is important during the early stages of 50S assembly. It makes multiple contacts with different domains of the 23S rRNA in the assembled 50S subunit and ribosome. Functionally, forms part of the polypeptide exit tunnel. This is Large ribosomal subunit protein uL4 from Mycoplasma mobile (strain ATCC 43663 / 163K / NCTC 11711) (Mesomycoplasma mobile).